Consider the following 175-residue polypeptide: uncharacterized protein (175 aa).

At Met1–Glu2 the chain is on the extracellular side. The helical transmembrane segment at Ser3–Gly23 threads the bilayer. Over Ser24–Arg151 the chain is Cytoplasmic. Residues Ser26–Ile88 are disordered. Residues Phe59–Pro78 are compositionally biased toward polar residues. A helical transmembrane segment spans residues Val152–Glu172. Over Ala173–Arg175 the chain is Extracellular.

It localises to the membrane. This is an uncharacterized protein from Saccharomyces cerevisiae (strain ATCC 204508 / S288c) (Baker's yeast).